The sequence spans 240 residues: Large ribosomal subunit protein uL2 (240 aa).

The segment at 200–240 is disordered; the sequence is HPFGGGGRQHPGKPKSISRNAPPGRKVGDIASKRTGRGGNE.

It belongs to the universal ribosomal protein uL2 family. Part of the 50S ribosomal subunit. Forms a bridge to the 30S subunit in the 70S ribosome. Interacts weakly with protein L37Ae.

One of the primary rRNA binding proteins. Required for association of the 30S and 50S subunits to form the 70S ribosome, for tRNA binding and peptide bond formation. It has been suggested to have peptidyltransferase activity; this is somewhat controversial. Makes several contacts with the 16S rRNA in the 70S ribosome. This is Large ribosomal subunit protein uL2 (rpl2) from Haloarcula marismortui (strain ATCC 43049 / DSM 3752 / JCM 8966 / VKM B-1809) (Halobacterium marismortui).